Consider the following 66-residue polypeptide: Small ribosomal subunit protein bS21 (66 aa).

The protein belongs to the bacterial ribosomal protein bS21 family.

The sequence is that of Small ribosomal subunit protein bS21 from Bdellovibrio bacteriovorus (strain ATCC 15356 / DSM 50701 / NCIMB 9529 / HD100).